We begin with the raw amino-acid sequence, 551 residues long: Probable 4-coumarate--CoA ligase 1 (551 aa).

ATP contacts are provided by Ser205, Ser206, Gly207, Thr208, Thr209, and Lys213. Tyr253 is a binding site for (E)-4-coumaroyl-AMP. Lys274 serves as a coordination point for CoA. Residues 276 to 346 (EPVRFLELIQ…RFKGRLVIKQ (71 aa)) are SBD1. Residues Ala323, Gln346, Gly347, and Thr351 each contribute to the (E)-4-coumaroyl-AMP site. Gln346, Gly347, Thr351, Asp430, and Arg445 together coordinate ATP. Residues 347–409 (GYGATELSPA…IKGPNVMLGY (63 aa)) are SBD2. Residues Lys447 and Lys451 each coordinate (E)-4-coumaroyl-AMP. Residues Lys453 and Gly454 each contribute to the CoA site. An ATP-binding site is contributed by Lys537.

This sequence belongs to the ATP-dependent AMP-binding enzyme family. Mg(2+) is required as a cofactor.

The catalysed reaction is (E)-4-coumarate + ATP + CoA = (E)-4-coumaroyl-CoA + AMP + diphosphate. The enzyme catalyses (E)-4-coumarate + ATP + H(+) = (E)-4-coumaroyl-AMP + diphosphate. It catalyses the reaction (E)-4-coumaroyl-AMP + CoA = (E)-4-coumaroyl-CoA + AMP + H(+). It participates in phytoalexin biosynthesis; 3,4',5-trihydroxystilbene biosynthesis; 3,4',5-trihydroxystilbene from trans-4-coumarate: step 1/2. Functionally, carboxylate--CoA ligase that may use 4-coumarate as substrate. Follows a two-step reaction mechanism, wherein the carboxylate substrate first undergoes adenylation by ATP, followed by a thioesterification in the presence of CoA to yield the final CoA thioester. This is Probable 4-coumarate--CoA ligase 1 (4cl1) from Dictyostelium discoideum (Social amoeba).